The primary structure comprises 323 residues: HPr kinase/phosphorylase (323 aa).

Catalysis depends on residues His-146 and Lys-167. Residue 161 to 168 (GESGLGKS) participates in ATP binding. Residue Ser-168 participates in Mg(2+) binding. Asp-185 acts as the Proton acceptor; for phosphorylation activity. Proton donor; for dephosphorylation activity in catalysis. Residues 209 to 218 (LEVRGLGLLD) form an important for the catalytic mechanism of both phosphorylation and dephosphorylation region. Glu-210 serves as a coordination point for Mg(2+). Arg-250 is a catalytic residue. The important for the catalytic mechanism of dephosphorylation stretch occupies residues 271–276 (QVAAGR).

Belongs to the HPrK/P family. Homohexamer. Mg(2+) is required as a cofactor.

The enzyme catalyses [HPr protein]-L-serine + ATP = [HPr protein]-O-phospho-L-serine + ADP + H(+). It carries out the reaction [HPr protein]-O-phospho-L-serine + phosphate + H(+) = [HPr protein]-L-serine + diphosphate. In terms of biological role, catalyzes the ATP- as well as the pyrophosphate-dependent phosphorylation of a specific serine residue in HPr, a phosphocarrier protein of the phosphoenolpyruvate-dependent sugar phosphotransferase system (PTS). HprK/P also catalyzes the pyrophosphate-producing, inorganic phosphate-dependent dephosphorylation (phosphorolysis) of seryl-phosphorylated HPr (P-Ser-HPr). In Cupriavidus metallidurans (strain ATCC 43123 / DSM 2839 / NBRC 102507 / CH34) (Ralstonia metallidurans), this protein is HPr kinase/phosphorylase.